Reading from the N-terminus, the 412-residue chain is Branched-chain alpha-ketoacid dehydrogenase kinase (412 aa).

The transit peptide at Met1–Arg30 directs the protein to the mitochondrion. Ser31 is modified (phosphoserine). Position 52 is a phosphoserine; by autocatalysis (Ser52). The Histidine kinase domain occupies Leu159 to Asp404. N6-acetyllysine is present on residues Lys192 and Lys233. ATP-binding residues include Asn279 and Asp315. Residue Asn279 participates in Mg(2+) binding. Residues Val328, Asp330, and Phe333 each coordinate K(+). ATP is bound by residues Thr334 and Thr335. 2 positions are modified to phosphoserine: Ser356 and Ser360. His364, Gly367, and Leu370 together coordinate ATP. Residue Gly367 participates in K(+) binding.

It belongs to the PDK/BCKDK protein kinase family. Homodimer. Homotetramer. Dimerizes through interaction of two opposing nucleotide-binding domains. Interacts with E2 component of the branched-chain alpha-ketoacid dehydrogenase (BCKDH) complex. Competes with BCKDK for binding to the E2 component; this interaction is modulated by branched-chain alpha-keto acids. At steady state, BCKDH holoenzyme contains BCKDK and BCKDHA is phosphorylated. In response to high levels of branched-chain alpha-keto acids, the inhibitory BCKDK is replaced by activating PPM1K leading to BCKDHA dephosphorylation and BCAA degradation. In terms of processing, autophosphorylated.

It is found in the mitochondrion matrix. It localises to the mitochondrion. The enzyme catalyses L-seryl-[3-methyl-2-oxobutanoate dehydrogenase] + ATP = O-phospho-L-seryl-[3-methyl-2-oxobutanoate dehydrogenase] + ADP + H(+). It carries out the reaction L-seryl-[protein] + ATP = O-phospho-L-seryl-[protein] + ADP + H(+). In terms of biological role, serine/threonine-protein kinase component of macronutrients metabolism. Forms a functional kinase and phosphatase pair with PPM1K, serving as a metabolic regulatory node that coordinates branched-chain amino acids (BCAAs) with glucose and lipid metabolism via two distinct phosphoprotein targets: mitochondrial BCKDHA subunit of the branched-chain alpha-ketoacid dehydrogenase (BCKDH) complex and cytosolic ACLY, a lipogenic enzyme of Krebs cycle. Phosphorylates and inactivates mitochondrial BCKDH complex a multisubunit complex consisting of three multimeric components each involved in different steps of BCAA catabolism: E1 composed of BCKDHA and BCKDHB, E2 core composed of DBT monomers, and E3 composed of DLD monomers. Associates with the E2 component of BCKDH complex and phosphorylates BCKDHA on Ser-347, leading to conformational changes that interrupt substrate channeling between E1 and E2 and inactivates the BCKDH complex. Phosphorylates ACLY on Ser-455 in response to changes in cellular carbohydrate abundance such as occurs during fasting to feeding metabolic transition. Refeeding stimulates MLXIPL/ChREBP transcription factor, leading to increased BCKDK to PPM1K expression ratio, phosphorylation and activation of ACLY that ultimately results in the generation of malonyl-CoA and oxaloacetate immediate substrates of de novo lipogenesis and glucogenesis, respectively. Recognizes phosphosites having SxxE/D canonical motif. The chain is Branched-chain alpha-ketoacid dehydrogenase kinase (BCKDK) from Bos taurus (Bovine).